Reading from the N-terminus, the 244-residue chain is Agamous-like MADS-box protein MADS3 (244 aa).

An MADS-box domain is found at 1–61; sequence MGRGRVELKR…GKLYEFGSAG (61 aa). Residues 85–175 enclose the K-box domain; the sequence is TQSWYQEVSK…KLKLEAEGQS (91 aa). Residues 180-206 form a disordered region; it reads QGSWNPSTATAGNSSFPVHPSQSNPMD. Residues 181 to 204 show a composition bias toward polar residues; that stretch reads GSWNPSTATAGNSSFPVHPSQSNP.

Expressed in flowers and seeds.

It localises to the nucleus. Functionally, probable transcription factor involved in flower development. The sequence is that of Agamous-like MADS-box protein MADS3 from Vitis vinifera (Grape).